We begin with the raw amino-acid sequence, 465 residues long: Sodium-dependent phosphate transport protein 1 (465 aa).

N-linked (GlcNAc...) asparagine glycans are attached at residues asparagine 47 and asparagine 56. Transmembrane regions (helical) follow at residues 79–99 (GIIFSSIFYGAFLIQIPVGYI), 109–129 (IGFALFLSSLVSIFIPQAAAV), 171–191 (MSLSGFLLGPFIVLLVTGIIC), 198–218 (MVFYIFGACGCAVCLLWFVLY), 255–275 (AMIKSLPLWAISFCCFAYLWT), 304–324 (LPYLFAWICGVIAGHTADFLM), 337–357 (LFTAIGLLLPIVFSMCLLYLS), 363–383 (TITFLILANASSSFCLGGALI), 399–419 (VTTLIGMTGGMTSSTVAGLFL), and 428–448 (FKIFLLMSIINVISVIFYLIF).

This sequence belongs to the major facilitator superfamily. Sodium/anion cotransporter family. In terms of assembly, interacts with PDZK1. In terms of tissue distribution, kidney cortex and liver.

It is found in the apical cell membrane. The enzyme catalyses 3 Na(+)(out) + phosphate(out) = 3 Na(+)(in) + phosphate(in). It catalyses the reaction urate(out) = urate(in). Important for the resorption of phosphate by the kidney. May be involved in actively transporting phosphate into cells via Na(+) cotransport in the renal brush border membrane. Plays a role in urate transport in the kidney. The polypeptide is Sodium-dependent phosphate transport protein 1 (SLC17A1) (Oryctolagus cuniculus (Rabbit)).